Here is a 421-residue protein sequence, read N- to C-terminus: Trimethyllysine dioxygenase, mitochondrial (421 aa).

Residues 1-15 (MWYHRLSHLHSRLQD) constitute a mitochondrion transit peptide. N6-acetyllysine is present on residues lysine 179 and lysine 236. Residues histidine 242, aspartate 244, and histidine 389 each coordinate Fe cation.

The protein belongs to the gamma-BBH/TMLD family. Homodimer. It depends on Fe(2+) as a cofactor. The cofactor is L-ascorbate. In terms of tissue distribution, all isoforms, but isoform 8, are widely expressed in adult and fetal tissues. Isoform 8 is restricted to heart and skeletal muscle.

It localises to the mitochondrion matrix. The catalysed reaction is N(6),N(6),N(6)-trimethyl-L-lysine + 2-oxoglutarate + O2 = (3S)-3-hydroxy-N(6),N(6),N(6)-trimethyl-L-lysine + succinate + CO2. It functions in the pathway amine and polyamine biosynthesis; carnitine biosynthesis. Converts trimethyllysine (TML) into hydroxytrimethyllysine (HTML). The sequence is that of Trimethyllysine dioxygenase, mitochondrial (TMLHE) from Homo sapiens (Human).